An 859-amino-acid chain; its full sequence is Anoctamin-7 (859 aa).

At 1 to 297 the chain is on the cytoplasmic side; that stretch reads MLRGQAREED…YFAWLGFYTG (297 aa). Residues 25–50 are disordered; it reads GCSYGSTAQASEAGKQQVAPSRVGSS. Residues 298–318 form a helical membrane-spanning segment; that stretch reads WLLPAAVVGTVVFLVGCFLVF. Residues 319–362 lie on the Extracellular side of the membrane; that stretch reads SDIPTQELCHSSDSFDMCPLCSDCSFWLLSSACTLAQAGRLFDH. A helical transmembrane segment spans residues 363–383; the sequence is GGTVFFSLFMALWAVLLLEYW. Over 384–441 the chain is Cytoplasmic; it reads KRKNATLAYRWDCSDYEDIEERPRPQFAATAPMTALNPITGEDEPYFPEKNRVRRMLA. Residues 442-462 form a helical membrane-spanning segment; sequence GSVVLLMMVAVVIMCLVSVIL. Topologically, residues 463-492 are extracellular; sequence YRAVMAIIVSRSDNAFLSAWASRIASLTGS. A helical membrane pass occupies residues 493–513; it reads VVNLVFILILSKVYVLLAQVL. The Cytoplasmic segment spans residues 514–530; it reads TRWEMHRTQTEFEDAFT. The helical transmembrane segment at 531 to 551 threads the bilayer; sequence LKVFIFQFVNFYASPVYIAFF. The Extracellular portion of the chain corresponds to 552–651; the sequence is KGRFVGYPGN…FHEYLEMVLQ (100 aa). A helical transmembrane segment spans residues 652-672; that stretch reads FGFVTIFVAACPLAPLFALLN. The Cytoplasmic segment spans residues 673–700; the sequence is NWVEIRLDARKFVCEYRRPVAERAQDIG. The helical transmembrane segment at 701–721 threads the bilayer; sequence IWFHILTGLTHLAVISNAFLL. At 722 to 780 the chain is on the extracellular side; the sequence is AFSSDFLPRVYYSWTHAPDLHGFLNFTLARAPPTFTSAHNRTCRYRAFRDDDGHYSPTY. Asparagine 746 and asparagine 761 each carry an N-linked (GlcNAc...) asparagine glycan. The helical transmembrane segment at 781 to 801 threads the bilayer; the sequence is WTLLAIRLAFVIVFEHVVFSI. The Cytoplasmic portion of the chain corresponds to 802–859; sequence GRVLDLLVPDIPESVEIKVKREYYLAKQALAENEALLGATGVKDDQPPSSEPSLGLPA.

It belongs to the anoctamin family. As to expression, highly expressed in the stomach. Expressed at low levels in small intestine and large intestine.

It localises to the cell membrane. It is found in the endoplasmic reticulum. It carries out the reaction a 1,2-diacyl-sn-glycero-3-phospho-L-serine(in) = a 1,2-diacyl-sn-glycero-3-phospho-L-serine(out). The enzyme catalyses a beta-D-galactosyl-(1&lt;-&gt;1')-N-acylsphing-4-enine(out) = a beta-D-galactosyl-(1&lt;-&gt;1')-N-acylsphing-4-enine(in). It catalyses the reaction a 1,2-diacyl-sn-glycero-3-phosphocholine(in) = a 1,2-diacyl-sn-glycero-3-phosphocholine(out). Functionally, has calcium-dependent phospholipid scramblase activity; scrambles phosphatidylserine, phosphatidylcholine and galactosylceramide. Does not exhibit calcium-activated chloride channel (CaCC) activity. May play a role in cell-cell interactions. In Mus musculus (Mouse), this protein is Anoctamin-7 (Ano7).